We begin with the raw amino-acid sequence, 350 residues long: MAIDENKQKALAAALSLIEKQFGTGSIMRLGEDRSMDVETISTGSLSLDIALGAGGLPMGRIVEIYGPESSGKTTLTLQVIATAQKEGKICAFIDAEHALDPIYAKNLGVDIDNLLCSQPDTGEQALEICDVLTRSGAVDVIIVDSVAALTPKAEIEGEIGDSHIGLAARMMSQAMRKLTSNLKNANTLLIFINQIRMKIGVMFGNPETTTGGNALKFYSSVRLDIRRIGSVKEGDVVVGSETRVKVVKNKVAAPFKQADFQITYGKGINIHGELVDLGVKNNLIEKAGSWYSYNGNKIGQGKNNVCNFLKYHPQLAAELDKKLREMLLHNTTRTESNSLVRDDEGTFDE.

Residue 67 to 74 participates in ATP binding; it reads GPESSGKT.

The protein belongs to the RecA family.

Its subcellular location is the cytoplasm. Can catalyze the hydrolysis of ATP in the presence of single-stranded DNA, the ATP-dependent uptake of single-stranded DNA by duplex DNA, and the ATP-dependent hybridization of homologous single-stranded DNAs. It interacts with LexA causing its activation and leading to its autocatalytic cleavage. This is Protein RecA from Baumannia cicadellinicola subsp. Homalodisca coagulata.